The chain runs to 123 residues: Small ribosomal subunit protein uS12 (123 aa).

Residues 10–20 show a composition bias toward basic residues; sequence KGRKKVKKKKT. Residues 10-32 form a disordered region; sequence KGRKKVKKKKTAPALQGSPQKRG. Asp-89 carries the post-translational modification 3-methylthioaspartic acid.

The protein belongs to the universal ribosomal protein uS12 family. As to quaternary structure, part of the 30S ribosomal subunit. Contacts proteins S8 and S17. May interact with IF1 in the 30S initiation complex.

Functionally, with S4 and S5 plays an important role in translational accuracy. Its function is as follows. Interacts with and stabilizes bases of the 16S rRNA that are involved in tRNA selection in the A site and with the mRNA backbone. Located at the interface of the 30S and 50S subunits, it traverses the body of the 30S subunit contacting proteins on the other side and probably holding the rRNA structure together. The combined cluster of proteins S8, S12 and S17 appears to hold together the shoulder and platform of the 30S subunit. This is Small ribosomal subunit protein uS12 from Halothermothrix orenii (strain H 168 / OCM 544 / DSM 9562).